Here is a 1268-residue protein sequence, read N- to C-terminus: SR-related and CTD-associated factor 8 (1268 aa).

One can recognise a CID domain in the interval Met1 to Pro139. Position 6 is a phosphothreonine (Thr6). Residue Lys18 forms a Glycyl lysine isopeptide (Lys-Gly) (interchain with G-Cter in SUMO1) linkage. Residues Gly270–Met283 show a composition bias toward basic and acidic residues. Disordered stretches follow at residues Gly270–His290, Gln322–Phe355, and Glu385–Ser469. A Phosphoserine modification is found at Ser273. Polar residues predominate over residues Lys327–His354. A compositionally biased stretch (basic residues) spans Val394 to Ser443. The span at Ser447–Lys461 shows a compositional bias: basic and acidic residues. The region spanning Thr477–Asn551 is the RRM domain. Residue Ser617 is modified to Phosphoserine. The disordered stretch occupies residues Gln776–Thr807. An asymmetric dimethylarginine mark is found at Arg915, Arg925, and Arg936. Disordered regions lie at residues Pro984–Arg1012 and Arg1040–Met1065. Arg1071 is modified (asymmetric dimethylarginine). The tract at residues Ala1199–Thr1268 is disordered. Positions Gly1249–Ser1262 are enriched in low complexity.

In terms of assembly, interacts with POLR2A; via C-terminal heptapeptide repeat domain (CTD) phosphorylated at 'Ser-2' and 'Ser-5'. Identified in a complex with CDC5L and other spliceosomal proteins.

It localises to the nucleus. The protein localises to the nucleus matrix. Functionally, anti-terminator protein required to prevent early mRNA termination during transcription. Together with SCAF4, acts by suppressing the use of early, alternative poly(A) sites, thereby preventing the accumulation of non-functional truncated proteins. Mechanistically, associates with the phosphorylated C-terminal heptapeptide repeat domain (CTD) of the largest RNA polymerase II subunit (POLR2A), and subsequently binds nascent RNA upstream of early polyadenylation sites to prevent premature mRNA transcript cleavage and polyadenylation. Independently of SCAF4, also acts as a positive regulator of transcript elongation. This chain is SR-related and CTD-associated factor 8, found in Mus musculus (Mouse).